An 895-amino-acid polypeptide reads, in one-letter code: Probable inorganic carbon transporter subunit DabA 1 (895 aa).

Zn(2+) is bound by residues Cys398, Asp400, His581, and Cys596.

This sequence belongs to the inorganic carbon transporter (TC 9.A.2) DabA family. In terms of assembly, forms a complex with DabB. Requires Zn(2+) as cofactor.

Its subcellular location is the cell inner membrane. In terms of biological role, part of an energy-coupled inorganic carbon pump. The chain is Probable inorganic carbon transporter subunit DabA 1 from Rhodopirellula baltica (strain DSM 10527 / NCIMB 13988 / SH1).